A 508-amino-acid polypeptide reads, in one-letter code: Bifunctional NAD(P)H-hydrate repair enzyme Nnr (508 aa).

The segment at 1–224 (MSGLCACTLV…QVRSVLGEDH (224 aa)) is NAD(P)H-hydrate epimerase. The YjeF N-terminal domain maps to 15–217 (VQQLEAALFA…EIGFSEAQVR (203 aa)). The NADPHX 1; for epimerase activity stretch occupies residues 64–68 (HNGGD). Residues N65 and D126 each contribute to the K(+) site. Positions 130–136 (GFGLERP) are NADPHX 1; for epimerase activity. (6S)-NADPHX contacts are provided by Y141 and D159. S162 contributes to the K(+) binding site. One can recognise a YjeF C-terminal domain in the interval 232 to 506 (PDAARAGLPL…LGLLPFLAAD (275 aa)). The segment at 232–508 (PDAARAGLPL…LLPFLAADGP (277 aa)) is ADP-dependent (S)-NAD(P)H-hydrate dehydratase. G334 serves as a coordination point for (6S)-NADPHX. The interval 383–389 (HPGEFKR) is NADPHX 2; for dehydratase activity. ADP is bound by residues 417–421 (KGART) and 437–446 (SPALARGGSG). (6S)-NADPHX is bound at residue D447.

It in the N-terminal section; belongs to the NnrE/AIBP family. This sequence in the C-terminal section; belongs to the NnrD/CARKD family. It depends on K(+) as a cofactor.

It carries out the reaction (6S)-NADHX + ADP = AMP + phosphate + NADH + H(+). The enzyme catalyses (6S)-NADPHX + ADP = AMP + phosphate + NADPH + H(+). The catalysed reaction is (6R)-NADHX = (6S)-NADHX. It catalyses the reaction (6R)-NADPHX = (6S)-NADPHX. Functionally, bifunctional enzyme that catalyzes the epimerization of the S- and R-forms of NAD(P)HX and the dehydration of the S-form of NAD(P)HX at the expense of ADP, which is converted to AMP. This allows the repair of both epimers of NAD(P)HX, a damaged form of NAD(P)H that is a result of enzymatic or heat-dependent hydration. This is Bifunctional NAD(P)H-hydrate repair enzyme Nnr (nnr) from Gloeobacter violaceus (strain ATCC 29082 / PCC 7421).